We begin with the raw amino-acid sequence, 272 residues long: Rhomboid-type serine protease B (272 aa).

5 helical membrane passes run 30 to 50 (IVLL…WSVV), 72 to 92 (PFIH…TPLL), 103 to 123 (TAVA…YILV), 133 to 153 (AVVG…IKTF), and 164 to 184 (TKIP…IFVP). The active-site Nucleophile is serine 138. Asparagine 185 carries an N-linked (GlcNAc...) asparagine glycan. The helical transmembrane segment at 186–206 (TSFLGHLSAIIIGYLLGLGYL) threads the bilayer. Histidine 191 is an active-site residue.

Belongs to the peptidase S54 family.

The protein resides in the membrane. It catalyses the reaction Cleaves type-1 transmembrane domains using a catalytic dyad composed of serine and histidine that are contributed by different transmembrane domains.. In terms of biological role, rhomboid protease that catalyzes intramembrane proteolysis. Required for transcription factor srbA activation by mediating its release from the membrane and thereby regulating its activity under hypoxic conditions. Essential for iron homeostasis and resistance to azoles such as voriconazole. Required for virulence in murine models of invasive pulmonary aspergillosis (IPA). This chain is Rhomboid-type serine protease B, found in Aspergillus fumigatus (strain CBS 144.89 / FGSC A1163 / CEA10) (Neosartorya fumigata).